A 234-amino-acid chain; its full sequence is Small ribosomal subunit protein eS4 (234 aa).

The 64-residue stretch at 43 to 106 (MPIAVWLRDY…NEYYRVLLDE (64 aa)) folds into the S4 RNA-binding domain.

The protein belongs to the eukaryotic ribosomal protein eS4 family.

The protein is Small ribosomal subunit protein eS4 of Nanoarchaeum equitans (strain Kin4-M).